The sequence spans 452 residues: Ribulose bisphosphate carboxylase large chain (452 aa).

A propeptide spanning residues 1 to 2 (MS) is cleaved from the precursor. An N-acetylproline modification is found at proline 3. At lysine 14 the chain carries N6,N6,N6-trimethyllysine. Substrate contacts are provided by asparagine 123 and threonine 173. Lysine 175 acts as the Proton acceptor in catalysis. Lysine 177 provides a ligand contact to substrate. Residues lysine 201, aspartate 203, and glutamate 204 each coordinate Mg(2+). The residue at position 201 (lysine 201) is an N6-carboxylysine. Histidine 294 functions as the Proton acceptor in the catalytic mechanism. 3 residues coordinate substrate: arginine 295, residue 327, and serine 379.

Belongs to the RuBisCO large chain family. Type I subfamily. Heterohexadecamer of 8 large chains and 8 small chains; disulfide-linked. The disulfide link is formed within the large subunit homodimers. It depends on Mg(2+) as a cofactor. In terms of processing, the disulfide bond which can form in the large chain dimeric partners within the hexadecamer appears to be associated with oxidative stress and protein turnover.

It localises to the plastid. The protein resides in the chloroplast. It carries out the reaction 2 (2R)-3-phosphoglycerate + 2 H(+) = D-ribulose 1,5-bisphosphate + CO2 + H2O. The enzyme catalyses D-ribulose 1,5-bisphosphate + O2 = 2-phosphoglycolate + (2R)-3-phosphoglycerate + 2 H(+). In terms of biological role, ruBisCO catalyzes two reactions: the carboxylation of D-ribulose 1,5-bisphosphate, the primary event in carbon dioxide fixation, as well as the oxidative fragmentation of the pentose substrate in the photorespiration process. Both reactions occur simultaneously and in competition at the same active site. This chain is Ribulose bisphosphate carboxylase large chain, found in Salvadora persica (Toothbrush tree).